The chain runs to 224 residues: Large ribosomal subunit protein uL4 (224 aa).

The segment at 53-74 (RNRSEVSHSTKKPFKQKGTGNA) is disordered.

This sequence belongs to the universal ribosomal protein uL4 family. As to quaternary structure, part of the 50S ribosomal subunit.

Functionally, one of the primary rRNA binding proteins, this protein initially binds near the 5'-end of the 23S rRNA. It is important during the early stages of 50S assembly. It makes multiple contacts with different domains of the 23S rRNA in the assembled 50S subunit and ribosome. Forms part of the polypeptide exit tunnel. The sequence is that of Large ribosomal subunit protein uL4 from Chlamydia pneumoniae (Chlamydophila pneumoniae).